The sequence spans 443 residues: Protein FAM83A (443 aa).

The tract at residues 311 to 403 (DSGVSVMTDS…YYQRNYAPDS (93 aa)) is disordered. Over residues 315–326 (SVMTDSTPESVN) the composition is skewed to polar residues. 2 stretches are compositionally biased toward low complexity: residues 327 to 344 (TTSE…SNDS) and 388 to 399 (SNYQPNYYQRNY).

It belongs to the FAM83 family.

It localises to the cytoplasm. Its function is as follows. May function in the epidermal growth factor receptor/EGFR signaling pathway. This Xenopus laevis (African clawed frog) protein is Protein FAM83A.